The primary structure comprises 132 residues: Fatty acid-binding protein 1 (132 aa).

A fatty acid-binding positions include arginine 106 and 128 to 130 (RYY).

It belongs to the calycin superfamily. Fatty-acid binding protein (FABP) family. In terms of assembly, monomer. As to expression, midgut.

It is found in the cytoplasm. Functionally, binds fatty acids in a 1:1 molar ratio. This chain is Fatty acid-binding protein 1 (MFB1), found in Manduca sexta (Tobacco hawkmoth).